Here is a 311-residue protein sequence, read N- to C-terminus: Putative UPF0607 protein ENSP00000382826 (311 aa).

The span at 48–61 shows a compositional bias: basic and acidic residues; sequence AEEPKEATEVKDQV. Disordered stretches follow at residues 48–99, 186–229, and 291–311; these read AEEP…WYNP, GLLM…PLQL, and RKQLLRRRKKTRQGRRGGSCL. The segment covering 78 to 97 has biased composition (polar residues); the sequence is EAASTSRPLETQGNLTSSWY. Composition is skewed to basic residues over residues 213–222 and 291–305; these read AGHRSRKRKL and RKQLLRRRKKTRQGR.

It belongs to the UPF0607 family.

The chain is Putative UPF0607 protein ENSP00000382826 from Homo sapiens (Human).